We begin with the raw amino-acid sequence, 286 residues long: Bifunctional protein FolD (286 aa).

NADP(+) is bound by residues 166 to 168 (GRS), Ser191, and Ile232.

It belongs to the tetrahydrofolate dehydrogenase/cyclohydrolase family. In terms of assembly, homodimer.

It carries out the reaction (6R)-5,10-methylene-5,6,7,8-tetrahydrofolate + NADP(+) = (6R)-5,10-methenyltetrahydrofolate + NADPH. The enzyme catalyses (6R)-5,10-methenyltetrahydrofolate + H2O = (6R)-10-formyltetrahydrofolate + H(+). It participates in one-carbon metabolism; tetrahydrofolate interconversion. Its function is as follows. Catalyzes the oxidation of 5,10-methylenetetrahydrofolate to 5,10-methenyltetrahydrofolate and then the hydrolysis of 5,10-methenyltetrahydrofolate to 10-formyltetrahydrofolate. The sequence is that of Bifunctional protein FolD from Herpetosiphon aurantiacus (strain ATCC 23779 / DSM 785 / 114-95).